Reading from the N-terminus, the 134-residue chain is Putative pre-16S rRNA nuclease (134 aa).

It belongs to the YqgF nuclease family.

It is found in the cytoplasm. Its function is as follows. Could be a nuclease involved in processing of the 5'-end of pre-16S rRNA. The sequence is that of Putative pre-16S rRNA nuclease from Helicobacter pylori (strain Shi470).